Consider the following 455-residue polypeptide: MGLVDGYDTSSDSDLNFDEGKSVHEKKNGNLHEDTSYEPSSNNIHKRKSHFTKSELKRRRKTRKGDGPWGSWSSSDDETSQASETQKEDQDIFVHALAEDNLDSEQIEVEEVSHFYGKSEKDYQGRGYLYPPNDVDVDLREERISFRCYLPKKVIRNYPGHPEGTTALKFLPKTGHLILSGGNDHTIKIWDFYHDYECLRDFQGHNKPIKALRFTEDCQSFLSSSFDRSVKIWDTETGKVKTRLHLNSTPADVESRPTNPHEFIVGLSNSKILHYDDRVSENQGLVQTYDHHLSSILALKYFPDGSKFISSSEDKTVRIWENQINVPIKQISDTAQHSMPFLNVHPSQNYFCAQSMDNRIYSFSLKPKYKRHPKKIFKGHSSAGYGISLAFSGDGRYICSGDSKSRLFTWDWNTSRLLNNIKIPGNKPITQVDWHPQETSKVICSGAAGKIYVCD.

The tract at residues 1-89 (MGLVDGYDTS…SQASETQKED (89 aa)) is disordered. Residues 18–35 (DEGKSVHEKKNGNLHEDT) show a composition bias toward basic and acidic residues. Residues 44–63 (IHKRKSHFTKSELKRRRKTR) show a composition bias toward basic residues. WD repeat units lie at residues 160 to 200 (GHPE…ECLR), 204 to 243 (GHNK…VKTR), 291 to 330 (HHLS…PIKQ), 334 to 373 (TAQH…KRHP), 379 to 422 (GHSS…NNIK), and 424 to 454 (PGNK…IYVC).

In terms of assembly, belongs to the CWC complex (or CEF1-associated complex), a spliceosome sub-complex reminiscent of a late-stage spliceosome composed of the U2, U5 and U6 snRNAs and at least BUD13, BUD31, BRR2, CDC40, CEF1, CLF1, CUS1, CWC2, CWC15, CWC21, CWC22, CWC23, CWC24, CWC25, CWC27, ECM2, HSH155, IST3, ISY1, LEA1, MSL1, NTC20, PRP8, PRP9, PRP11, PRP19, PRP21, PRP22, PRP45, PRP46, SLU7, SMB1, SMD1, SMD2, SMD3, SMX2, SMX3, SNT309, SNU114, SPP2, SYF1, SYF2, RSE1 and YJU2.

The protein localises to the nucleus. Functionally, may function in the second step of pre-mRNA splicing. Regulatory protein involved in replication and mitotic spindle formation and/or maintenance. Required for initiation and completion of S-phase and for initiation and completion of DNA replication. Might be required for the maintenance of microtubules. Essential only at elevated temperatures. This Saccharomyces cerevisiae (strain ATCC 204508 / S288c) (Baker's yeast) protein is Pre-mRNA-processing factor 17 (CDC40).